The sequence spans 447 residues: MELSQMSELMGLSVLLGLLALMATAAVARGWLRAGEERSGRPACQKANGFPPDKSSGSKKQKQYQRIRKEKPQQHNFTHRLLAAALKSHSGNISCMDFSSNGKYLATCADDRTIRIWSTKDFLQREHRSMRANVELDHATLVRFSPDCRAFIVWLANGDTLRVFKMTKREDGGYTFTATPEDFPKKHKAPVIDIGIANTGKFIMTASSDTTVLIWSLKGQVLSTINTNQMNNTHAAVSPCGRFVASCGFTPDVKVWEVCFGKKGEFQEVVRAFELKGHSAAVHSFAFSNDSRRMASVSKDGTWKLWDTDVEYKKKQDPYLLKTGRFEEAAGAAPCRLALSPNAQVLALASGSSIHLYNTRRGEKEECFERVHGECIANLSFDITGRFLASCGDRAVRLFHNTPGHRAMVEEMQGHLKRASNESTRQRLQQQLTQAQETLKSLGALKK.

Residues 38 to 72 (RSGRPACQKANGFPPDKSSGSKKQKQYQRIRKEKP) are disordered. The segment covering 57–69 (GSKKQKQYQRIRK) has biased composition (basic residues). WD repeat units follow at residues 88–127 (SHSGNISCMDFSSNGKYLATCADDRTIRIWSTKDFLQREH), 134–174 (VELD…DGGY), 186–226 (KHKA…STIN), 228–267 (NQMNNTHAAVSPCGRFVASCGFTPDVKVWEVCFGKKGEFQ), 277–316 (GHSAAVHSFAFSNDSRRMASVSKDGTWKLWDTDVEYKKKQ), 329–367 (AAGAAPCRLALSPNAQVLALASGSSIHLYNTRRGEKEEC), and 371–409 (VHGECIANLSFDITGRFLASCGDRAVRLFHNTPGHRAMV). A Glycyl lysine isopeptide (Lys-Gly) (interchain with G-Cter in SUMO2) cross-link involves residue Lys168. Position 433 is a phosphothreonine; by ATM or ATR (Thr433).

The protein is Transducin beta-like protein 2 (TBL2) of Homo sapiens (Human).